A 483-amino-acid polypeptide reads, in one-letter code: Iron-sulfur cluster assembly SufBD family protein ycf24 (483 aa).

The protein belongs to the iron-sulfur cluster assembly SufBD family.

It localises to the plastid. The protein localises to the chloroplast. The polypeptide is Iron-sulfur cluster assembly SufBD family protein ycf24 (ycf24) (Guillardia theta (Cryptophyte)).